We begin with the raw amino-acid sequence, 317 residues long: Regulator of microtubule dynamics protein 1 (317 aa).

An N6-succinyllysine modification is found at lysine 168. TPR repeat units follow at residues 171–207 and 225–261; these read AICI…NPKD and PWYQ…DPNF.

This sequence belongs to the RMDN family. In terms of assembly, interacts with microtubules.

It localises to the cytoplasm. It is found in the cytoskeleton. Its subcellular location is the spindle. The protein resides in the spindle pole. This Bos taurus (Bovine) protein is Regulator of microtubule dynamics protein 1 (RMDN1).